The chain runs to 259 residues: Bisphosphoglycerate mutase (259 aa).

Serine 2 carries the N-acetylserine modification. Substrate contacts are provided by residues 10-17 (RHGEGAWN), 23-24 (CS), arginine 62, 89-92 (ERHY), arginine 100, and 116-117 (RR). Histidine 11 serves as the catalytic Tele-phosphohistidine intermediate. Glutamate 89 (proton donor/acceptor) is an active-site residue. Threonine 122 is subject to Phosphothreonine. Residue 189 to 190 (GN) coordinates substrate.

The protein belongs to the phosphoglycerate mutase family. BPG-dependent PGAM subfamily. Homodimer.

The catalysed reaction is (2R)-3-phospho-glyceroyl phosphate = (2R)-2,3-bisphosphoglycerate + H(+). The enzyme catalyses (2R)-2-phosphoglycerate = (2R)-3-phosphoglycerate. At alkaline pH BPGM favors the synthase reaction; however, at lower pH the phosphatase reaction is dominant. Inhibited by citrate. Functionally, plays a major role in regulating hemoglobin oxygen affinity by controlling the levels of its allosteric effector 2,3-bisphosphoglycerate (2,3-BPG). Also exhibits mutase (EC 5.4.2.11) activity. This Macaca fascicularis (Crab-eating macaque) protein is Bisphosphoglycerate mutase (BPGM).